Reading from the N-terminus, the 570-residue chain is MSTTSRTLITSAIPYINGIKHLGNLVGSQLPADLYARYLRARGQEVLFLCATDEHGTPAELAAAKAGKPVAEYCADMHAVQAEIARGFRLSFDHFGRSSSPQNHALTQHFAGKLADAGLIAEVEEKQVYSHADGRFLPDRYIEGTCPNCGYDKARGDQCENCTKQLDPTDLINPRSAISGSTDLEVRETKHLYLRQSQLRGQLSDWISSKTDWPILTTSIAKKWLNDGDGLQDRGITRDLDWGVPVKRGDADWPGMEGKVFYVWFDAPIEYIACAAEAVEEGSISDWERWWRVDKGADDVRYVQFMGKDNVPFHTLSFPATILGSGEPWKLVDYIKSFNYLNYDGGQFSTSQGRGVFMDQALEILPSDYWRWWLLSHAPETSDAEFTWEAFQQDVNKDLADVLGNFVSRITKFCRSKFGEVVPEGGDYGPQETALIADLDKRLAAYQTHMDAIDIRKAAAELRAIWVAGNEYLQSAAPWTAFKTDPDRAAAITRFALNLIPFYAGLSAPFIPDAAQAMAEGMHTNLTWPKDARLTTLPAGHAFTVPDVLFAKIADEQREDWAARFSGVRD.

Positions 14–24 (PYINGIKHLGN) match the 'HIGH' region motif. Zn(2+)-binding residues include Cys146, Cys149, Cys159, and Cys162. Residues 347–351 (QFSTS) carry the 'KMSKS' region motif. Thr350 contacts ATP.

It belongs to the class-I aminoacyl-tRNA synthetase family. MetG type 1 subfamily. Monomer. The cofactor is Zn(2+).

It is found in the cytoplasm. It catalyses the reaction tRNA(Met) + L-methionine + ATP = L-methionyl-tRNA(Met) + AMP + diphosphate. Is required not only for elongation of protein synthesis but also for the initiation of all mRNA translation through initiator tRNA(fMet) aminoacylation. The chain is Methionine--tRNA ligase from Jannaschia sp. (strain CCS1).